The primary structure comprises 83 residues: Small ribosomal subunit protein bS20 (83 aa).

The protein belongs to the bacterial ribosomal protein bS20 family.

Its function is as follows. Binds directly to 16S ribosomal RNA. The sequence is that of Small ribosomal subunit protein bS20 from Leuconostoc mesenteroides subsp. mesenteroides (strain ATCC 8293 / DSM 20343 / BCRC 11652 / CCM 1803 / JCM 6124 / NCDO 523 / NBRC 100496 / NCIMB 8023 / NCTC 12954 / NRRL B-1118 / 37Y).